Reading from the N-terminus, the 467-residue chain is Solute carrier family 52, riboflavin transporter, member 3 (467 aa).

At 1 to 2 the chain is on the cytoplasmic side; that stretch reads MA. The helical transmembrane segment at 3 to 23 threads the bilayer; it reads FLIHLLVCTFGMGSWVAINGL. Over 24–43 the chain is Extracellular; sequence WVELPLLVTELPEGWYLPSY. A helical transmembrane segment spans residues 44 to 64; that stretch reads LTVIIQLANVGPLLVTLLHHF. Residues 65 to 71 lie on the Cytoplasmic side of the membrane; the sequence is RPGCLSE. A helical membrane pass occupies residues 72-92; sequence VAVVFTVLGVGTIACTLFAFL. The Extracellular portion of the chain corresponds to 93–105; the sequence is WNVTSWVLGSRHS. Residue Asn-94 is glycosylated (N-linked (GlcNAc...) asparagine). A helical transmembrane segment spans residues 106–126; sequence IAFLVLTFFLALVDCTSSVTF. The Cytoplasmic portion of the chain corresponds to 127–137; that stretch reads LPFMSRLPTYY. The helical transmembrane segment at 138–158 threads the bilayer; the sequence is LTTFFVGEGLSGLLPALVALA. The Extracellular portion of the chain corresponds to 159–220; sequence QGSGLTTCVN…SRYLPANFSP (62 aa). An N-linked (GlcNAc...) asparagine glycan is attached at Asn-168. Residues 221–241 traverse the membrane as a helical segment; that stretch reads LVFFLLLSFMMACCFISFFFL. At 242 to 294 the chain is on the cytoplasmic side; that stretch reads QRQPKRWEASIEDLLTSQVTLNSIRPQEGKDLGPPEESGKAQDPPEEKTAPQH. Ser-251 bears the Phosphoserine mark. Residues 266–288 form a disordered region; it reads RPQEGKDLGPPEESGKAQDPPEE. A compositionally biased stretch (basic and acidic residues) spans 268 to 288; sequence QEGKDLGPPEESGKAQDPPEE. The helical transmembrane segment at 295–315 threads the bilayer; the sequence is LAHLTFIYVLVAFVNALTNGV. Residues 316–333 are Extracellular-facing; it reads LPSVQTYSCLSYGPVAYH. Residues 334–354 traverse the membrane as a helical segment; the sequence is LSATLSSMASPLTCFLSIFLP. Over 355-359 the chain is Cytoplasmic; it reads NRSLP. Residues 360–380 traverse the membrane as a helical segment; that stretch reads FLGVLAVLGTSFGAYNMAMAV. At 381–394 the chain is on the extracellular side; it reads MSPCPFMQGHWGGE. Residues 395 to 415 form a helical membrane-spanning segment; that stretch reads VLIVVSWVLFTGCLSYVKVML. The Cytoplasmic portion of the chain corresponds to 416-425; the sequence is GVILRDHSRS. A helical transmembrane segment spans residues 426–446; the sequence is ALLWCGAAVQLGSLLGAVVMF. Residues 447–467 are Extracellular-facing; it reads PLVNVLRLFSSADFCSLQCSA.

This sequence belongs to the riboflavin transporter family.

Its subcellular location is the cell membrane. The catalysed reaction is riboflavin(in) = riboflavin(out). Plasma membrane transporter mediating the uptake by cells of the water soluble vitamin B2/riboflavin that plays a key role in biochemical oxidation-reduction reactions of the carbohydrate, lipid, and amino acid metabolism. This chain is Solute carrier family 52, riboflavin transporter, member 3 (SLC52A3), found in Bos taurus (Bovine).